A 512-amino-acid chain; its full sequence is 2,3-bisphosphoglycerate-independent phosphoglycerate mutase (512 aa).

Mn(2+) contacts are provided by Asp-12 and Ser-62. Ser-62 (phosphoserine intermediate) is an active-site residue. Substrate contacts are provided by residues His-123, 153–154, Arg-185, Arg-191, 260–263, and Lys-333; these read RD and RPDR. Mn(2+) contacts are provided by Asp-400, His-404, Asp-441, His-442, and His-460.

It belongs to the BPG-independent phosphoglycerate mutase family. In terms of assembly, monomer. Mn(2+) serves as cofactor.

It carries out the reaction (2R)-2-phosphoglycerate = (2R)-3-phosphoglycerate. It participates in carbohydrate degradation; glycolysis; pyruvate from D-glyceraldehyde 3-phosphate: step 3/5. Functionally, catalyzes the interconversion of 2-phosphoglycerate and 3-phosphoglycerate. This chain is 2,3-bisphosphoglycerate-independent phosphoglycerate mutase, found in Clostridium perfringens (strain 13 / Type A).